Consider the following 574-residue polypeptide: ATP-dependent RNA helicase RhlB (574 aa).

The Q motif motif lies at 9–37 (VTFSSFDLHPALVAGLESAGFTRCTPIQA). One can recognise a Helicase ATP-binding domain in the interval 40–220 (LPVALPGGDV…YEHMNEPEKL (181 aa)). 53–60 (AQTGTGKT) contributes to the ATP binding site. The DEAD box signature appears at 166–169 (DEAD). The region spanning 231-393 (RVRQRIYFPS…PVTSELLTPL (163 aa)) is the Helicase C-terminal domain. Positions 423-432 (EQRAAEEQRR) are enriched in basic and acidic residues. Residues 423–574 (EQRAAEEQRR…RRLRSLVSGN (152 aa)) are disordered. The span at 435–449 (GRSGPGGGSRSGSGG) shows a compositional bias: gly residues. A compositionally biased stretch (low complexity) spans 477–495 (AAAAQTEKPVVAAAAAQAP). Over residues 506–515 (PRKRRRRRNG) the composition is skewed to basic residues. 2 stretches are compositionally biased toward low complexity: residues 523–535 (PAVASTPIAAPAA) and 553–562 (SSGSPSLLGR).

This sequence belongs to the DEAD box helicase family. RhlB subfamily. Component of the RNA degradosome, which is a multiprotein complex involved in RNA processing and mRNA degradation.

Its subcellular location is the cytoplasm. The catalysed reaction is ATP + H2O = ADP + phosphate + H(+). DEAD-box RNA helicase involved in RNA degradation. Has RNA-dependent ATPase activity and unwinds double-stranded RNA. The chain is ATP-dependent RNA helicase RhlB from Xanthomonas oryzae pv. oryzae (strain KACC10331 / KXO85).